Reading from the N-terminus, the 404-residue chain is Methionine aminopeptidase 1D, mitochondrial (404 aa).

A mitochondrion-targeting transit peptide spans 1–58 (MNKILKNIINKSSINNVFKTSFNGGISSSSSSSSSYLNNNNNIIKSYNVQQKQQQRYY). Residues 86–109 (VRSQRLTKKTASPLEGMNRKERRK) form a disordered region. Histidine 232 serves as a coordination point for substrate. Aspartate 249, aspartate 260, and histidine 323 together coordinate a divalent metal cation. Histidine 330 contributes to the substrate binding site. Positions 355 and 389 each coordinate a divalent metal cation.

Belongs to the peptidase M24A family. Methionine aminopeptidase type 1 subfamily. Requires Co(2+) as cofactor. The cofactor is Zn(2+). Mn(2+) serves as cofactor. It depends on Fe(2+) as a cofactor.

It localises to the mitochondrion. It catalyses the reaction Release of N-terminal amino acids, preferentially methionine, from peptides and arylamides.. Functionally, removes the N-terminal methionine from nascent proteins. The N-terminal methionine is often cleaved when the second residue in the primary sequence is small and uncharged (Met-Ala-, Cys, Gly, Pro, Ser, Thr, or Val). The chain is Methionine aminopeptidase 1D, mitochondrial (metap1d) from Dictyostelium discoideum (Social amoeba).